The chain runs to 140 residues: Large ribosomal subunit protein uL11 (140 aa).

It belongs to the universal ribosomal protein uL11 family. Part of the ribosomal stalk of the 50S ribosomal subunit. Interacts with L10 and the large rRNA to form the base of the stalk. L10 forms an elongated spine to which L12 dimers bind in a sequential fashion forming a multimeric L10(L12)X complex. One or more lysine residues are methylated.

Its function is as follows. Forms part of the ribosomal stalk which helps the ribosome interact with GTP-bound translation factors. The chain is Large ribosomal subunit protein uL11 from Desulfovibrio desulfuricans (strain ATCC 27774 / DSM 6949 / MB).